We begin with the raw amino-acid sequence, 294 residues long: Bifunctional protein FolD (294 aa).

NADP(+) is bound by residues 175–177 and isoleucine 241; that span reads GAS.

The protein belongs to the tetrahydrofolate dehydrogenase/cyclohydrolase family. As to quaternary structure, homodimer.

The catalysed reaction is (6R)-5,10-methylene-5,6,7,8-tetrahydrofolate + NADP(+) = (6R)-5,10-methenyltetrahydrofolate + NADPH. It catalyses the reaction (6R)-5,10-methenyltetrahydrofolate + H2O = (6R)-10-formyltetrahydrofolate + H(+). It functions in the pathway one-carbon metabolism; tetrahydrofolate interconversion. Its function is as follows. Catalyzes the oxidation of 5,10-methylenetetrahydrofolate to 5,10-methenyltetrahydrofolate and then the hydrolysis of 5,10-methenyltetrahydrofolate to 10-formyltetrahydrofolate. This chain is Bifunctional protein FolD, found in Hahella chejuensis (strain KCTC 2396).